A 526-amino-acid polypeptide reads, in one-letter code: tRNA-2-methylthio-N(6)-dimethylallyladenosine synthase (526 aa).

Residues 14–130 form the MTTase N-terminal domain; the sequence is RTYQVRTYGC…LPTLLERARH (117 aa). Cysteine 23, cysteine 59, cysteine 93, cysteine 167, cysteine 171, and cysteine 174 together coordinate [4Fe-4S] cluster. The Radical SAM core domain maps to 153 to 401; sequence RESAYAGWVS…IELQERISLE (249 aa). The TRAM domain occupies 404 to 483; that stretch reads QAQVGRTLEL…PHHLIADGAL (80 aa).

It belongs to the methylthiotransferase family. MiaB subfamily. As to quaternary structure, monomer. [4Fe-4S] cluster is required as a cofactor.

It localises to the cytoplasm. The catalysed reaction is N(6)-dimethylallyladenosine(37) in tRNA + (sulfur carrier)-SH + AH2 + 2 S-adenosyl-L-methionine = 2-methylsulfanyl-N(6)-dimethylallyladenosine(37) in tRNA + (sulfur carrier)-H + 5'-deoxyadenosine + L-methionine + A + S-adenosyl-L-homocysteine + 2 H(+). Its function is as follows. Catalyzes the methylthiolation of N6-(dimethylallyl)adenosine (i(6)A), leading to the formation of 2-methylthio-N6-(dimethylallyl)adenosine (ms(2)i(6)A) at position 37 in tRNAs that read codons beginning with uridine. This Mycobacterium sp. (strain JLS) protein is tRNA-2-methylthio-N(6)-dimethylallyladenosine synthase.